We begin with the raw amino-acid sequence, 341 residues long: Probable 2' cyclic ADP-D-ribose synthase TcpO (341 aa).

In terms of domain architecture, TIR spans 204–336 (KEYDIFVSHS…EIIHEILERI (133 aa)). NAD(+)-binding positions include 213 to 214 (SS) and lysine 243. Glutamate 279 is a catalytic residue.

The enzyme catalyses NAD(+) + H2O = ADP-D-ribose + nicotinamide + H(+). The catalysed reaction is NAD(+) = 2'cADPR + nicotinamide + H(+). In terms of biological role, NAD(+) hydrolase (NADase) that catalyzes cleavage of NAD(+) into ADP-D-ribose (ADPR) and nicotinamide. In addition to ADPR, also generates a cyclization variant of cyclic ADPR (cADPR), termed v-cADPR (probably 2'cADPR). This chain is Probable 2' cyclic ADP-D-ribose synthase TcpO, found in Methanobrevibacter olleyae.